A 172-amino-acid chain; its full sequence is MSKKIAVLITDEFEDSEFTSPADEFRKAGHEVITIEKQAGKTVKGKKGEASVTIDKSIDEVTPAEFDALLLPGGHSPDYLRGDNRFVTFTRDFVNSGKPVFAICHGPQLLISADVIRGRKLTAVKPIIIDVKNAGAEFYDQEVVVDKDQLVTSRTPDDLPAFNREALRLLGA.

Residues lysine 3–glycine 171 enclose the PfpI endopeptidase domain. Residue cysteine 104 is the Nucleophile of the active site.

It belongs to the peptidase C56 family. As to quaternary structure, exists in monomeric, trimeric, and hexameric forms.

It localises to the cytoplasm. The enzyme catalyses N(omega)-(1-hydroxy-2-oxopropyl)-L-arginyl-[protein] + H2O = lactate + L-arginyl-[protein] + H(+). It carries out the reaction N(6)-(1-hydroxy-2-oxopropyl)-L-lysyl-[protein] + H2O = lactate + L-lysyl-[protein] + H(+). It catalyses the reaction S-(1-hydroxy-2-oxopropyl)-L-cysteinyl-[protein] + H2O = lactate + L-cysteinyl-[protein] + H(+). The catalysed reaction is N(omega)-(1-hydroxy-2-oxoethyl)-L-arginyl-[protein] + H2O = L-arginyl-[protein] + glycolate + H(+). The enzyme catalyses N(6)-(1-hydroxy-2-oxoethyl)-L-lysyl-[protein] + H2O = glycolate + L-lysyl-[protein] + H(+). It carries out the reaction S-(1-hydroxy-2-oxoethyl)-L-cysteinyl-[protein] + H2O = glycolate + L-cysteinyl-[protein] + H(+). It catalyses the reaction N(2)-(1-hydroxy-2-oxopropyl)-dGTP + H2O = lactate + dGTP + H(+). The catalysed reaction is N(2)-(1-hydroxy-2-oxopropyl)-GTP + H2O = lactate + GTP + H(+). The enzyme catalyses N(2)-(1-hydroxy-2-oxopropyl)-GDP + H2O = lactate + GDP + H(+). It carries out the reaction N(2)-(1-hydroxy-2-oxopropyl)-GMP + H2O = lactate + GMP + H(+). It catalyses the reaction N(2)-(1-hydroxy-2-oxoethyl)-dGTP + H2O = dGTP + glycolate + H(+). The catalysed reaction is N(2)-(1-hydroxy-2-oxoethyl)-GTP + H2O = glycolate + GTP + H(+). The enzyme catalyses N(2)-(1-hydroxy-2-oxoethyl)-GDP + H2O = glycolate + GDP + H(+). It carries out the reaction N(2)-(1-hydroxy-2-oxoethyl)-GMP + H2O = glycolate + GMP + H(+). It catalyses the reaction an N(2)-(1-hydroxy-2-oxopropyl)-guanosine in RNA + H2O = a guanosine in RNA + lactate + H(+). The catalysed reaction is an N(2)-(1-hydroxy-2-oxopropyl)-2'-deoxyguanosine in DNA + H2O = a 2'-deoxyguanosine in DNA + lactate + H(+). The enzyme catalyses an N(2)-(1-hydroxy-2-oxoethyl)-guanosine in RNA + H2O = a guanosine in RNA + glycolate + H(+). It carries out the reaction an N(2)-(1-hydroxy-2-oxoethyl)-2'-deoxyguanosine in DNA + H2O = a 2'-deoxyguanosine in DNA + glycolate + H(+). Glyoxalase activity is inhibited by zinc ions at pH 7.0. Protein and nucleotide deglycase that catalyzes the deglycation of the Maillard adducts formed between amino groups of proteins or nucleotides and reactive carbonyl groups of glyoxals. Thus, functions as a protein deglycase that repairs methylglyoxal- and glyoxal-glycated proteins, and releases repaired proteins and lactate or glycolate, respectively. Deglycates cysteine, arginine and lysine residues in proteins, and thus reactivates these proteins by reversing glycation by glyoxals. Is able to repair glycated serum albumin, collagen, glyceraldehyde-3-phosphate dehydrogenase, and fructose biphosphate aldolase. Acts on early glycation intermediates (hemithioacetals and aminocarbinols), preventing the formation of advanced glycation endproducts (AGE) that cause irreversible damage. Also functions as a nucleotide deglycase able to repair glycated guanine in the free nucleotide pool (GTP, GDP, GMP, dGTP) and in DNA and RNA. Is thus involved in a major nucleotide repair system named guanine glycation repair (GG repair), dedicated to reversing methylglyoxal and glyoxal damage via nucleotide sanitization and direct nucleic acid repair. In vitro, prevents acrylamide formation in asparagine/glyoxal and asparagine/sugar mixtures at 55 degrees Celsius, likely by degrading asparagine/glyoxal Maillard adducts formed at high temperatures. Also displays an apparent glyoxalase activity that in fact reflects its deglycase activity. Is a general stress protein; is required for the protection of bacterial cells against many environmental stresses, including oxidative, thermal, osmotic, UV, and pH stresses. And plays an important role in protection against electrophile/carbonyl stress. The protein is Protein/nucleic acid deglycase 2 (yhbO) of Escherichia coli (strain K12).